A 378-amino-acid polypeptide reads, in one-letter code: Cytochrome b (378 aa).

4 consecutive transmembrane segments (helical) span residues 33–53, 77–98, 113–133, and 178–198; these read SGSLLGLCLIIQILTGLFLSM, WLIRNMHANGASFFFICIYFHI, XNVGVILLLLVMMTAFVGYVL, and FFAFLFLLPFIIAAMTMIHLI. Residues histidine 83 and histidine 97 each coordinate heme b. Residue histidine 196 participates in heme b binding. Position 201 (histidine 201) interacts with a ubiquinone. The next 4 membrane-spanning stretches (helical) occupy residues 226 to 246, 288 to 308, 320 to 340, and 347 to 367; these read FKDLLGFIMLLTILVSLALFS, LGGVLALLFSILVLLLMPILH, LTQFLFWLLIADVAVLTWIGG, and FIIIGQIASALYFTIFLVLFP.

This sequence belongs to the cytochrome b family. As to quaternary structure, the cytochrome bc1 complex contains 3 respiratory subunits (MT-CYB, CYC1 and UQCRFS1), 2 core proteins (UQCRC1 and UQCRC2) and probably 6 low-molecular weight proteins. The cofactor is heme b.

It localises to the mitochondrion inner membrane. In terms of biological role, component of the ubiquinol-cytochrome c reductase complex (complex III or cytochrome b-c1 complex) that is part of the mitochondrial respiratory chain. The b-c1 complex mediates electron transfer from ubiquinol to cytochrome c. Contributes to the generation of a proton gradient across the mitochondrial membrane that is then used for ATP synthesis. This is Cytochrome b (mt-cyb) from Nannacara anomala (Goldeneye cichlid).